A 280-amino-acid polypeptide reads, in one-letter code: Shikimate dehydrogenase (NADP(+)) (280 aa).

Residues 15–17 (SLS) and T62 contribute to the shikimate site. The active-site Proton acceptor is the K66. 2 residues coordinate shikimate: N88 and D104. Residues 128 to 132 (GAGGA), 151 to 156 (NRTEER), and I222 contribute to the NADP(+) site. Residue Y224 participates in shikimate binding. G245 provides a ligand contact to NADP(+).

The protein belongs to the shikimate dehydrogenase family. In terms of assembly, homodimer.

It carries out the reaction shikimate + NADP(+) = 3-dehydroshikimate + NADPH + H(+). Its pathway is metabolic intermediate biosynthesis; chorismate biosynthesis; chorismate from D-erythrose 4-phosphate and phosphoenolpyruvate: step 4/7. Involved in the biosynthesis of the chorismate, which leads to the biosynthesis of aromatic amino acids. Catalyzes the reversible NADPH linked reduction of 3-dehydroshikimate (DHSA) to yield shikimate (SA). In Methanosarcina acetivorans (strain ATCC 35395 / DSM 2834 / JCM 12185 / C2A), this protein is Shikimate dehydrogenase (NADP(+)).